A 187-amino-acid polypeptide reads, in one-letter code: UPF0301 protein PMI0339 (187 aa).

Belongs to the UPF0301 (AlgH) family.

This Proteus mirabilis (strain HI4320) protein is UPF0301 protein PMI0339.